We begin with the raw amino-acid sequence, 250 residues long: 5'/3'-nucleotidase SurE (250 aa).

Asp-9, Asp-10, Ser-40, and Asn-93 together coordinate a divalent metal cation.

This sequence belongs to the SurE nucleotidase family. Requires a divalent metal cation as cofactor.

The protein localises to the cytoplasm. The enzyme catalyses a ribonucleoside 5'-phosphate + H2O = a ribonucleoside + phosphate. It carries out the reaction a ribonucleoside 3'-phosphate + H2O = a ribonucleoside + phosphate. The catalysed reaction is [phosphate](n) + H2O = [phosphate](n-1) + phosphate + H(+). Functionally, nucleotidase with a broad substrate specificity as it can dephosphorylate various ribo- and deoxyribonucleoside 5'-monophosphates and ribonucleoside 3'-monophosphates with highest affinity to 3'-AMP. Also hydrolyzes polyphosphate (exopolyphosphatase activity) with the preference for short-chain-length substrates (P20-25). Might be involved in the regulation of dNTP and NTP pools, and in the turnover of 3'-mononucleotides produced by numerous intracellular RNases (T1, T2, and F) during the degradation of various RNAs. The polypeptide is 5'/3'-nucleotidase SurE (Yersinia enterocolitica serotype O:8 / biotype 1B (strain NCTC 13174 / 8081)).